We begin with the raw amino-acid sequence, 461 residues long: Propionyl-CoA carboxylase regulator (461 aa).

Positions 11 to 65 constitute an HTH cro/C1-type domain; the sequence is LRELRVKLGLTQKVFAERLGASLPYLNQMENNHRPVSATVVLALAQEFGVDVTKL. A DNA-binding region (H-T-H motif) is located at residues 22–41; the sequence is QKVFAERLGASLPYLNQMEN.

Belongs to the short-chain fatty acyl-CoA assimilation regulator (ScfR) family.

Functionally, transcriptional regulator that controls propionyl-CoA assimilation through the methylmalonyl-CoA pathway via regulation of pccB expression. The chain is Propionyl-CoA carboxylase regulator from Cereibacter sphaeroides (strain ATCC 17023 / DSM 158 / JCM 6121 / CCUG 31486 / LMG 2827 / NBRC 12203 / NCIMB 8253 / ATH 2.4.1.) (Rhodobacter sphaeroides).